We begin with the raw amino-acid sequence, 872 residues long: Eukaryotic translation initiation factor 3 subunit C (872 aa).

Positions 1 to 100 (MSRFFRGGDD…KVKSAKDKRF (100 aa)) are disordered. 2 stretches are compositionally biased toward acidic residues: residues 16–59 (SSEE…DEEE) and 72–87 (SDDE…SDDE). A compositionally biased stretch (basic and acidic residues) spans 88–100 (ATTKVKSAKDKRF). Residues 613–787 (FHMHINLELL…ETVIFRKGVE (175 aa)) enclose the PCI domain. The interval 812–872 (TLEQKTQGSA…GGALGNAVRG (61 aa)) is disordered. Positions 831-848 (GGGQRGGGQRGGRGGART) are enriched in gly residues.

It belongs to the eIF-3 subunit C family. Component of the eukaryotic translation initiation factor 3 (eIF-3) complex.

It is found in the cytoplasm. Component of the eukaryotic translation initiation factor 3 (eIF-3) complex, which is involved in protein synthesis of a specialized repertoire of mRNAs and, together with other initiation factors, stimulates binding of mRNA and methionyl-tRNAi to the 40S ribosome. The eIF-3 complex specifically targets and initiates translation of a subset of mRNAs involved in cell proliferation. The protein is Eukaryotic translation initiation factor 3 subunit C (nip-1) of Neurospora crassa (strain ATCC 24698 / 74-OR23-1A / CBS 708.71 / DSM 1257 / FGSC 987).